The sequence spans 839 residues: Phosphatidylinositol-glycan-specific phospholipase D (839 aa).

Residues M1–P23 form the signal peptide. N-linked (GlcNAc...) asparagine glycosylation is found at N94, N271, N292, N307, and N321. 7 FG-GAP repeats span residues S365 to R427, K434 to S496, S498 to R558, N562 to R622, Q632 to R692, S703 to D769, and Q787 to D839. N500, N590, and N658 each carry an N-linked (GlcNAc...) asparagine glycan.

This sequence belongs to the GPLD1 family. As to quaternary structure, monomer. In terms of processing, glycosylated.

Its subcellular location is the secreted. The catalysed reaction is a 6-(alpha-D-glucosaminyl)-1-(1,2-diacyl-sn-glycero-3-phospho)-1D-myo-inositol + H2O = 6-(alpha-D-glucosaminyl)-1D-myo-inositol + a 1,2-diacyl-sn-glycero-3-phosphate + H(+). In terms of biological role, this protein hydrolyzes the inositol phosphate linkage in proteins anchored by phosphatidylinositol glycans (GPI-anchor) thus releasing these proteins from the membrane. The protein is Phosphatidylinositol-glycan-specific phospholipase D (GPLD1) of Bos taurus (Bovine).